A 189-amino-acid chain; its full sequence is Riboflavin kinase (189 aa).

The Mg(2+) site is built by Thr-42 and Asn-44. Glu-124 (nucleophile) is an active-site residue.

It belongs to the flavokinase family. It depends on Zn(2+) as a cofactor. The cofactor is Mg(2+).

The catalysed reaction is riboflavin + ATP = FMN + ADP + H(+). The protein operates within cofactor biosynthesis; FMN biosynthesis; FMN from riboflavin (ATP route): step 1/1. In terms of biological role, catalyzes the phosphorylation of riboflavin (vitamin B2) to form flavin mononucleotide (FMN) coenzyme. The polypeptide is Riboflavin kinase (FMN1) (Candida glabrata (strain ATCC 2001 / BCRC 20586 / JCM 3761 / NBRC 0622 / NRRL Y-65 / CBS 138) (Yeast)).